The primary structure comprises 247 residues: MLTVKGLNKSFGENEILKKIDMKIEKGKVIAILGPSGSGKTTLLRCLNALEIPNRGELAFDDFSIDFSKKVKQADILKLRRKSGMVFQAYHLFPHRTALENVMEGPVQVQKRNKEEVRKEAIQLLDKVGLKDKMDLYPFQLSGGQQQRVGIARALAIQPELMLFDEPTSALDPELVGEVLKVIKDLANEGWTMVVVTHEIKFAQEVADEVIFIDGGVIVEQGPPEQIFSAPKEERTQRFLNRILNPL.

In terms of domain architecture, ABC transporter spans 2 to 240 (LTVKGLNKSF…PKEERTQRFL (239 aa)). 34–41 (GPSGSGKT) provides a ligand contact to ATP.

It belongs to the ABC transporter superfamily. L-cystine importer (TC 3.A.1.3.14) family. As to quaternary structure, the complex is composed of two ATP-binding proteins (TcyC), two transmembrane proteins (TcyB) and a solute-binding protein (TcyA).

It localises to the cell membrane. Functionally, part of the ABC transporter complex TcyABC involved in L-cystine import. Responsible for energy coupling to the transport system. This chain is L-cystine import ATP-binding protein TcyC (tcyC), found in Bacillus subtilis (strain 168).